The sequence spans 204 residues: Neurensin-2 (204 aa).

The next 2 helical transmembrane spans lie at 66–86 (LSSG…GYAV) and 122–142 (LCVA…IGWL). Residues 178–204 (SGQSWFSPPASPFGQSSVQTIQPKRDS) form a disordered region. Residues 190-204 (FGQSSVQTIQPKRDS) show a composition bias toward polar residues.

Belongs to the VMP family.

The protein resides in the membrane. Its function is as follows. May play a role in maintenance and/or transport of vesicles. This Homo sapiens (Human) protein is Neurensin-2 (NRSN2).